A 206-amino-acid chain; its full sequence is Large ribosomal subunit protein uL4 (206 aa).

The disordered stretch occupies residues 49–76 (QSAKTRTEVRGGGIKPWRQKGTGRARQG).

The protein belongs to the universal ribosomal protein uL4 family. In terms of assembly, part of the 50S ribosomal subunit.

Functionally, one of the primary rRNA binding proteins, this protein initially binds near the 5'-end of the 23S rRNA. It is important during the early stages of 50S assembly. It makes multiple contacts with different domains of the 23S rRNA in the assembled 50S subunit and ribosome. Its function is as follows. Forms part of the polypeptide exit tunnel. The sequence is that of Large ribosomal subunit protein uL4 from Clostridium botulinum (strain Alaska E43 / Type E3).